A 96-amino-acid chain; its full sequence is Small ribosomal subunit protein bS6c (96 aa).

It belongs to the bacterial ribosomal protein bS6 family.

The protein localises to the plastid. It is found in the chloroplast. In terms of biological role, binds together with bS18 to 16S ribosomal RNA. This chain is Small ribosomal subunit protein bS6c (rps6), found in Trieres chinensis (Marine centric diatom).